We begin with the raw amino-acid sequence, 582 residues long: BTB/POZ domain and ankyrin repeat-containing protein NPR1 (582 aa).

Residues 1 to 12 (MEPPTSHVTNAF) show a composition bias toward polar residues. A disordered region spans residues 1–27 (MEPPTSHVTNAFSDSDSASVEEGDADA). The BTB domain occupies 55 to 140 (ADARIAVPGG…VLDYLYSGRV (86 aa)). The segment at 147 to 161 (ACLCVDEDCAHVGCH) adopts a C2HC NPR-type zinc-finger fold. Zn(2+) contacts are provided by cysteine 150, cysteine 155, histidine 157, and cysteine 160. ANK repeat units lie at residues 229–258 (RSNLDMITLEKSLPPDVIKQIIDARLSLGL), 269–299 (KHVRRIHRALDSDDVELVRMLLTEGQTNLDD), 301–328 (FALHYAVEHCDSKITTELLDLALADVNH), and 332–361 (RGYTVLHIAARRREPKIIVSLLTKGARPAD). Residues 391–526 (PSPKDRLCIE…VLDKIMDDET (136 aa)) are salicylic acid-binding core (SBC). Arginine 436 provides a ligand contact to salicylate. Disordered regions lie at residues 525 to 544 (ETDPVSLGRDTSAEKRKRFH) and 551 to 582 (QKAFHEDKEENDRSGLSSSSSSTSIGAIRPRR). The segment covering 553–563 (AFHEDKEENDR) has biased composition (basic and acidic residues). Residues 564–574 (SGLSSSSSSTS) show a composition bias toward low complexity.

The protein belongs to the plant 'ANKYRIN-BTB/POZ' family. 'NPR1-like' subfamily. In terms of assembly, oligomer in an uninduced state; disulfide-linked. Forms activated monomer upon changes in cellular redox potential. Interacts with TGA2.2. Interacts with NRR.

Its subcellular location is the cytoplasm. It is found in the nucleus. The protein localises to the nuclear body. It functions in the pathway protein modification; protein ubiquitination. Salicylic acid (SA)-binding substrate-specific adapter of an E3 ubiquitin-protein ligase complex (CUL3-RBX1-BTB) which mediates the ubiquitination and subsequent proteasomal degradation of target proteins. Transcription cofactor that represses gene expression in the absence of salicylic acid (SA), when attached to negative cis-elements (W-box) with WRKY transcription factors, but stimulates gene expression upon activation by SA, when sumoylated and attached to positive cis-elements (as-1) with TGA transcription factors, thus confering immunity through a series of gene regulations ending in a significant increase in antimicrobial and defense genes expression. Key positive factor of disease resistance. Involved in defense response against the bacterial blight disease caused by Xanthomonas oryzae pv. oryzae (Xoo). Plants over-expressing NPR1/NH1 acquire high levels of resistance to Xoo, express constitutively defense genes and develop lesion-mimic spots on leaves at pre-flowering stage. Involved in basal resistance to the blast pathogen Magnaporthe oryzae. Plants over-expressing NPR1/NH1 have increased resistance to M.oryzae infection. Plays an essential role in benzothiadiazole (BTH)-induced resistance to the blast fungus disease caused by Magnaporthe oryzae. Functions as a transcriptional coactivator of TGA2.1 and LG2 in vitro. Involved in defense response against herbivore. Plants silencing NPR1/NH1 have increased herbivore-induced trypsin proteinase inhibitors and volatiles, which reduces the performance of the striped stem borer (SSB) Chilo suppressalis. This is BTB/POZ domain and ankyrin repeat-containing protein NPR1 from Oryza sativa subsp. indica (Rice).